The chain runs to 412 residues: Imidazolonepropionase (412 aa).

2 residues coordinate Fe(3+): His76 and His78. The Zn(2+) site is built by His76 and His78. Positions 85, 148, and 181 each coordinate 4-imidazolone-5-propanoate. Tyr148 is a binding site for N-formimidoyl-L-glutamate. His242 is a binding site for Fe(3+). Position 242 (His242) interacts with Zn(2+). 4-imidazolone-5-propanoate is bound at residue Glu245. Asp317 lines the Fe(3+) pocket. Asp317 lines the Zn(2+) pocket. Positions 319 and 321 each coordinate N-formimidoyl-L-glutamate. Position 322 (Ser322) interacts with 4-imidazolone-5-propanoate.

It belongs to the metallo-dependent hydrolases superfamily. HutI family. Zn(2+) is required as a cofactor. Requires Fe(3+) as cofactor.

The protein resides in the cytoplasm. The enzyme catalyses 4-imidazolone-5-propanoate + H2O = N-formimidoyl-L-glutamate. Its pathway is amino-acid degradation; L-histidine degradation into L-glutamate; N-formimidoyl-L-glutamate from L-histidine: step 3/3. Functionally, catalyzes the hydrolytic cleavage of the carbon-nitrogen bond in imidazolone-5-propanoate to yield N-formimidoyl-L-glutamate. It is the third step in the universal histidine degradation pathway. This is Imidazolonepropionase from Staphylococcus aureus (strain USA300 / TCH1516).